We begin with the raw amino-acid sequence, 330 residues long: Catharanthine synthase (330 aa).

An Involved in the stabilization of the negatively charged intermediate by the formation of the oxyanion hole motif is present at residues 81–83 (HGA). Catharanthine is bound at residue Gly84. The active-site Proton acceptor is Ser173. The active site involves Asp274. A catharanthine-binding site is contributed by Tyr305. Catalysis depends on Tyr305, which acts as the Proton donor/acceptor.

Belongs to the 'GDXG' lipolytic enzyme family. In terms of assembly, interacts with dehydroprecondylocarpine acetate synthase (DPAS). Expressed in leaf epidermis.

The protein resides in the cytoplasm. It localises to the cytosol. It is found in the nucleus. It carries out the reaction dehydrosecodine = catharanthine. It participates in alkaloid biosynthesis. Functionally, component of iboga and aspidosperma monoterpenoid indole alkaloids (MIAs, e.g. tabersonine and catharanthine) biosynthesis pathway from 19E-geissoschizine, psychoactive compounds likely to be used in the treatment of opioid dependence. Catalyzes the conversion of dehydrosecodine to catharanthine. This Catharanthus roseus (Madagascar periwinkle) protein is Catharanthine synthase.